We begin with the raw amino-acid sequence, 323 residues long: D-alanine--D-alanine ligase (323 aa).

The 200-residue stretch at 120 to 319 folds into the ATP-grasp domain; it reads LSVLKPYGIK…LEDLFTNAIE (200 aa). 148-203 contributes to the ATP binding site; that stretch reads VKKVGLPCFVKPNKAGSSFGISKVKSEAELPIAIEVAYKEDNEIIIESFLDGTEVS. Residues E274, E286, and N288 each contribute to the Mg(2+) site.

It belongs to the D-alanine--D-alanine ligase family. Mg(2+) is required as a cofactor. It depends on Mn(2+) as a cofactor.

The protein localises to the cytoplasm. It catalyses the reaction 2 D-alanine + ATP = D-alanyl-D-alanine + ADP + phosphate + H(+). It participates in cell wall biogenesis; peptidoglycan biosynthesis. In terms of biological role, cell wall formation. The polypeptide is D-alanine--D-alanine ligase (Flavobacterium johnsoniae (strain ATCC 17061 / DSM 2064 / JCM 8514 / BCRC 14874 / CCUG 350202 / NBRC 14942 / NCIMB 11054 / UW101) (Cytophaga johnsonae)).